The primary structure comprises 132 residues: Small ribosomal subunit protein uS8c (132 aa).

Belongs to the universal ribosomal protein uS8 family. In terms of assembly, part of the 30S ribosomal subunit.

The protein localises to the plastid. It is found in the chloroplast. One of the primary rRNA binding proteins, it binds directly to 16S rRNA central domain where it helps coordinate assembly of the platform of the 30S subunit. The chain is Small ribosomal subunit protein uS8c (rps8) from Gracilaria tenuistipitata var. liui (Red alga).